Here is a 537-residue protein sequence, read N- to C-terminus: Cytochrome c oxidase subunit 1 (537 aa).

A helical transmembrane segment spans residues 22 to 42; sequence ILYLLFGLVSGIIGSVFSFII. Ca(2+) is bound by residues E45, A48, and G50. H68 is a Fe(II)-heme a binding site. Transmembrane regions (helical) follow at residues 70 to 90, 104 to 124, 152 to 172, 190 to 210, 241 to 261, 279 to 299, 318 to 338, and 345 to 365; these read ILMI…NYLV, VNNF…ISAL, LAIL…VNLI, LFAW…PVLA, LFWF…FGVV, MLWA…HHLF, IAIP…GGAI, and MLYA…GVIL. Residue H247 participates in Cu cation binding. Positions 247–251 form a cross-link, 1'-histidyl-3'-tyrosine (His-Tyr); it reads HPEVY. Y251 provides a ligand contact to O2. Positions 296 and 297 each coordinate Cu cation. Residues H375 and D376 each coordinate Mg(2+). The next 2 helical transmembrane spans lie at 379-399 and 418-438; these read FVVA…LCGA and IQFW…HFLG. H383 contacts heme a3. Residue H385 participates in Fe(II)-heme a binding. P447 contacts Ca(2+). Residues 458-478 form a helical membrane-spanning segment; it reads FVSSIGSVISILSLFLFMYVM.

It belongs to the heme-copper respiratory oxidase family. As to quaternary structure, component of the cytochrome c oxidase (complex IV, CIV), a multisubunit enzyme composed of a catalytic core of 3 subunits and several supernumerary subunits. The complex exists as a monomer or a dimer and forms supercomplexes (SCs) in the inner mitochondrial membrane with ubiquinol-cytochrome c oxidoreductase (cytochrome b-c1 complex, complex III, CIII). The cofactor is heme. Cu cation is required as a cofactor.

The protein resides in the mitochondrion inner membrane. It carries out the reaction 4 Fe(II)-[cytochrome c] + O2 + 8 H(+)(in) = 4 Fe(III)-[cytochrome c] + 2 H2O + 4 H(+)(out). It participates in energy metabolism; oxidative phosphorylation. Functionally, component of the cytochrome c oxidase, the last enzyme in the mitochondrial electron transport chain which drives oxidative phosphorylation. The respiratory chain contains 3 multisubunit complexes succinate dehydrogenase (complex II, CII), ubiquinol-cytochrome c oxidoreductase (cytochrome b-c1 complex, complex III, CIII) and cytochrome c oxidase (complex IV, CIV), that cooperate to transfer electrons derived from NADH and succinate to molecular oxygen, creating an electrochemical gradient over the inner membrane that drives transmembrane transport and the ATP synthase. Cytochrome c oxidase is the component of the respiratory chain that catalyzes the reduction of oxygen to water. Electrons originating from reduced cytochrome c in the intermembrane space (IMS) are transferred via the dinuclear copper A center (CU(A)) of subunit 2 and heme A of subunit 1 to the active site in subunit 1, a binuclear center (BNC) formed by heme A3 and copper B (CU(B)). The BNC reduces molecular oxygen to 2 water molecules using 4 electrons from cytochrome c in the IMS and 4 protons from the mitochondrial matrix. This Schizosaccharomyces pombe (strain 972 / ATCC 24843) (Fission yeast) protein is Cytochrome c oxidase subunit 1 (cox1).